A 313-amino-acid chain; its full sequence is Protein FixB (313 aa).

255-283 (LYLAVGISGQIQHMVGANASQTIFAINKD) is a binding site for FAD.

The protein belongs to the ETF alpha-subunit/FixB family. Heterodimer of FixA and FixB.

The protein operates within amine and polyamine metabolism; carnitine metabolism. Functionally, required for anaerobic carnitine reduction. May bring reductant to CaiA. This Escherichia coli O6:K15:H31 (strain 536 / UPEC) protein is Protein FixB.